A 147-amino-acid chain; its full sequence is Small ribosomal subunit protein uS12 (147 aa).

This sequence belongs to the universal ribosomal protein uS12 family. Part of the 30S ribosomal subunit.

With S4 and S5 plays an important role in translational accuracy. Located at the interface of the 30S and 50S subunits. The chain is Small ribosomal subunit protein uS12 from Thermococcus kodakarensis (strain ATCC BAA-918 / JCM 12380 / KOD1) (Pyrococcus kodakaraensis (strain KOD1)).